Reading from the N-terminus, the 107-residue chain is Putative regulatory protein BCG9842_A0044 (107 aa).

It belongs to the RemA family.

The protein is Putative regulatory protein BCG9842_A0044 of Bacillus cereus (strain G9842).